Reading from the N-terminus, the 306-residue chain is Aspartate carbamoyltransferase catalytic subunit (306 aa).

Carbamoyl phosphate contacts are provided by R54 and T55. K83 is an L-aspartate binding site. R104, H132, and Q135 together coordinate carbamoyl phosphate. Residues R165 and R227 each contribute to the L-aspartate site. Carbamoyl phosphate is bound by residues L266 and P267.

This sequence belongs to the aspartate/ornithine carbamoyltransferase superfamily. ATCase family. In terms of assembly, heterododecamer (2C3:3R2) of six catalytic PyrB chains organized as two trimers (C3), and six regulatory PyrI chains organized as three dimers (R2).

It carries out the reaction carbamoyl phosphate + L-aspartate = N-carbamoyl-L-aspartate + phosphate + H(+). It functions in the pathway pyrimidine metabolism; UMP biosynthesis via de novo pathway; (S)-dihydroorotate from bicarbonate: step 2/3. In terms of biological role, catalyzes the condensation of carbamoyl phosphate and aspartate to form carbamoyl aspartate and inorganic phosphate, the committed step in the de novo pyrimidine nucleotide biosynthesis pathway. The chain is Aspartate carbamoyltransferase catalytic subunit from Finegoldia magna (strain ATCC 29328 / DSM 20472 / WAL 2508) (Peptostreptococcus magnus).